The following is a 119-amino-acid chain: Developmental pluripotency-associated protein 5B/5C (119 aa).

Positions 24 to 86 constitute a KH; atypical domain; it reads PEVFQVQSLV…SIKVRAKWLL (63 aa).

The protein belongs to the KHDC1 family.

It is found in the cytoplasm. In terms of biological role, involved in the maintenance of embryonic stem (ES) cell pluripotency. Dispensable for self-renewal of pluripotent ES cells and establishment of germ cells. Associates with specific target mRNAs. In Mus musculus (Mouse), this protein is Developmental pluripotency-associated protein 5B/5C.